The primary structure comprises 104 residues: Large ribosomal subunit protein bL21 (104 aa).

Belongs to the bacterial ribosomal protein bL21 family. In terms of assembly, part of the 50S ribosomal subunit. Contacts protein L20.

This protein binds to 23S rRNA in the presence of protein L20. The protein is Large ribosomal subunit protein bL21 of Lactococcus lactis subsp. cremoris (strain MG1363).